The following is a 497-amino-acid chain: Nuclear pore complex protein npp-16 (497 aa).

3 disordered regions span residues Val76–Lys95, Thr210–Lys308, and Met359–Val379. Basic and acidic residues-rich tracts occupy residues Lys231 to Pro240 and Lys250 to Ala260. Positions Glu390–Val497 are ranBD1.

As to quaternary structure, interacts with importin beta imb-1. Interacts with DNA-directed RNA polymerase III subunit rpc-1. Interacts with TATA-box-binding protein tbp-1. Interacts with GTF3C5 homolog tftc-5. Interacts with GTF3C3 homolog tftc-3.

Its subcellular location is the nucleus. The protein localises to the nuclear pore complex. The protein resides in the nucleus membrane. Its function is as follows. Component of the nuclear pore complex. Plays a direct role in nuclear protein import. Required for anoxia-induced prophase arrest; may function in concert with cdk-1 to arrest prophase blastomeres in response to anoxia. In Caenorhabditis elegans, this protein is Nuclear pore complex protein npp-16.